The sequence spans 959 residues: Isoleucine--tRNA ligase (959 aa).

The 'HIGH' region motif lies at 60 to 70; sequence PYANGSLHMGH. Position 569 (Glu-569) interacts with L-isoleucyl-5'-AMP. A 'KMSKS' region motif is present at residues 610–614; it reads KMSKS. Lys-613 contacts ATP. Zn(2+) contacts are provided by Cys-928, Cys-931, Cys-948, and Cys-951.

The protein belongs to the class-I aminoacyl-tRNA synthetase family. IleS type 1 subfamily. Monomer. Requires Zn(2+) as cofactor.

The protein resides in the cytoplasm. It carries out the reaction tRNA(Ile) + L-isoleucine + ATP = L-isoleucyl-tRNA(Ile) + AMP + diphosphate. Its function is as follows. Catalyzes the attachment of isoleucine to tRNA(Ile). As IleRS can inadvertently accommodate and process structurally similar amino acids such as valine, to avoid such errors it has two additional distinct tRNA(Ile)-dependent editing activities. One activity is designated as 'pretransfer' editing and involves the hydrolysis of activated Val-AMP. The other activity is designated 'posttransfer' editing and involves deacylation of mischarged Val-tRNA(Ile). This chain is Isoleucine--tRNA ligase, found in Gloeothece citriformis (strain PCC 7424) (Cyanothece sp. (strain PCC 7424)).